The following is a 363-amino-acid chain: 3-isopropylmalate dehydrogenase (363 aa).

78 to 91 contributes to the NAD(+) binding site; the sequence is GKKWDTLPINERPE. Residues arginine 99, arginine 109, arginine 138, and aspartate 227 each coordinate substrate. Mg(2+) is bound by residues aspartate 227, aspartate 251, and aspartate 255. 285–297 provides a ligand contact to NAD(+); that stretch reads GSAPDIQGKNIAN.

This sequence belongs to the isocitrate and isopropylmalate dehydrogenases family. LeuB type 1 subfamily. Homodimer. Mg(2+) is required as a cofactor. It depends on Mn(2+) as a cofactor.

It localises to the cytoplasm. It carries out the reaction (2R,3S)-3-isopropylmalate + NAD(+) = 4-methyl-2-oxopentanoate + CO2 + NADH. It participates in amino-acid biosynthesis; L-leucine biosynthesis; L-leucine from 3-methyl-2-oxobutanoate: step 3/4. Functionally, catalyzes the oxidation of 3-carboxy-2-hydroxy-4-methylpentanoate (3-isopropylmalate) to 3-carboxy-4-methyl-2-oxopentanoate. The product decarboxylates to 4-methyl-2 oxopentanoate. The polypeptide is 3-isopropylmalate dehydrogenase (Buchnera aphidicola subsp. Diuraphis noxia).